The following is a 240-amino-acid chain: Protein unc-119 homolog A (240 aa).

The segment covering 1–12 has biased composition (gly residues); it reads MKVKKGGGGAGT. The interval 1-61 is disordered; that stretch reads MKVKKGGGGA…GPLQRKQRIG (61 aa). The span at 13–23 shows a compositional bias: low complexity; sequence GAEPASGAPGP. A phosphoserine; by CK2 mark is found at Ser-37, Ser-39, and Ser-41. Tyr-131 lines the tetradecanoate pocket.

This sequence belongs to the PDE6D/unc-119 family. As to quaternary structure, interacts with CABP4; in the absence of calcium. May interact with GTP-bound ARL1. Interacts with ARL2 and ARL3 (GTP-bound forms); this promotes the release of myristoylated cargo proteins. Found in a complex with ARL3, RP2 and UNC119; RP2 induces hydrolysis of GTP ARL3 in the complex, leading to the release of UNC119. Interacts with NPHP3 (when myristoylated). Interacts with CYS1 (when myristoylated). Interacts with MACIR; interaction only takes place when UNC119 is not liganded with myristoylated proteins. Interacts with LCK; this interaction plays a crucial role in activation of LCK. Interacts with FYN. Interacts with RAB11A; in a cell cycle-dependent manner. Interacts with LYN (via SH2 and SH3 domains); leading to LYN activation. Interacts with DNM1; leading to a decrease of DNM1 GTPase activity. Found in a complex with ABL1, ABL2, CRK and UNC119; leading to the inhibition of CRK phosphorylation by ABL kinases. Interacts with CD44. Interacts with KLHL18 (via kelch repeats). Interacts with PPP3CA, PPP3CB and PPP3CC. Interacts with USP48; this interaction promotes UNC119 stability. In terms of processing, phosphorylation suppresses its interaction with KLHL18 and down-regulates its KLHL18-mediated degradation. Phosphorylated more under light conditions than dark conditions. Dephosphorylated by calcineurin.

It is found in the cytoplasm. Its subcellular location is the cytoskeleton. The protein localises to the microtubule organizing center. It localises to the centrosome. The protein resides in the spindle. It is found in the spindle pole. In terms of biological role, involved in synaptic functions in photoreceptor cells, the signal transduction in immune cells as a Src family kinase activator, endosome recycling, the uptake of bacteria and endocytosis, protein trafficking in sensory neurons and as lipid-binding chaperone with specificity for a diverse subset of myristoylated proteins. Specifically binds the myristoyl moiety of a subset of N-terminally myristoylated proteins and is required for their localization. Binds myristoylated GNAT1 and is required for G-protein localization and trafficking in sensory neurons. Probably plays a role in trafficking proteins in photoreceptor cells. Plays important roles in mediating Src family kinase signals for the completion of cytokinesis via RAB11A. The sequence is that of Protein unc-119 homolog A (UNC119) from Canis lupus familiaris (Dog).